We begin with the raw amino-acid sequence, 298 residues long: Max-like protein X (298 aa).

The segment at 1–63 (MTEPGASPED…ARGCREDSSH (63 aa)) is disordered. S7 carries the post-translational modification Phosphoserine. A compositionally biased stretch (basic residues) spans 28 to 37 (GRARARRGSG). S45, S48, S74, S77, and S98 each carry phosphoserine. Residues 98-109 (SIGSTSASSVPN) are compositionally biased toward polar residues. The tract at residues 98–119 (SIGSTSASSVPNTDDEDSDYQQ) is disordered. The 59-residue stretch at 129–187 (RRRRAHTQAEQKRRDAIKRGYDDLQTIVPTCQQQDFSIGSQKLSKAIVLQKTIDYIQFL) folds into the bHLH domain. Residues 194-214 (QEEEVSTLRKDVTALKIMKVN) are leucine-zipper.

Efficient DNA binding requires dimerization with another bHLH protein. Binds DNA as a heterodimer with MAD1, MAD4, MNT, WBSCR14 and MLXIP. Can also bind DNA as a homodimer. As to expression, expressed in all tissues examined: stomach, duodenum, jejunum, ileum, colon, liver, pancreas, salivary gland, kidney, spleen, lung, heart, skeletal muscle, brain, ovary and testis.

It localises to the cytoplasm. Its subcellular location is the nucleus. Transcription regulator. Forms a sequence-specific DNA-binding protein complex with MAD1, MAD4, MNT, WBSCR14 and MLXIP which recognizes the core sequence 5'-CACGTG-3'. The TCFL4-MAD1, TCFL4-MAD4, TCFL4-WBSCR14 complexes are transcriptional repressors. Plays a role in transcriptional activation of glycolytic target genes. Involved in glucose-responsive gene regulation. This chain is Max-like protein X (Mlx), found in Mus musculus (Mouse).